The sequence spans 109 residues: Large ribosomal subunit protein bL19 (109 aa).

Belongs to the bacterial ribosomal protein bL19 family.

This protein is located at the 30S-50S ribosomal subunit interface and may play a role in the structure and function of the aminoacyl-tRNA binding site. This Rubrobacter xylanophilus (strain DSM 9941 / JCM 11954 / NBRC 16129 / PRD-1) protein is Large ribosomal subunit protein bL19.